A 125-amino-acid chain; its full sequence is Small ribosomal subunit protein uS13 (125 aa).

The protein belongs to the universal ribosomal protein uS13 family. In terms of assembly, part of the 30S ribosomal subunit. Forms a loose heterodimer with protein S19. Forms two bridges to the 50S subunit in the 70S ribosome.

In terms of biological role, located at the top of the head of the 30S subunit, it contacts several helices of the 16S rRNA. In the 70S ribosome it contacts the 23S rRNA (bridge B1a) and protein L5 of the 50S subunit (bridge B1b), connecting the 2 subunits; these bridges are implicated in subunit movement. Contacts the tRNAs in the A and P-sites. The polypeptide is Small ribosomal subunit protein uS13 (Rickettsia massiliae (strain Mtu5)).